A 484-amino-acid polypeptide reads, in one-letter code: GRIP domain-containing protein RUD3 (484 aa).

Basic residues predominate over residues 1-15 (MGKNKKKTGKKAKSH). Positions 1 to 75 (MGKNKKKTGK…GVDKQKVNDG (75 aa)) are disordered. The segment covering 16–30 (PHVEDVDETVNKPEE) has biased composition (basic and acidic residues). Ser-55 and Ser-64 each carry phosphoserine. Residues 61–72 (KDLSEGVDKQKV) show a composition bias toward basic and acidic residues. Positions 84–383 (LEDKKAGDEM…LQIGKLRHEA (300 aa)) form a coiled coil. A GRIP domain is found at 401–452 (SDSESVDKELISNLLISFVSIPRADPRKFEVLELLSNFLNWDEDKKQQAGLI). A Phosphoserine modification is found at Ser-468.

It is found in the golgi apparatus lumen. In terms of biological role, involved in the structural organization of the cis-Golgi and in vesicle targeting/fusion stages of ER to Golgi transport. This chain is GRIP domain-containing protein RUD3 (RUD3), found in Saccharomyces cerevisiae (strain ATCC 204508 / S288c) (Baker's yeast).